We begin with the raw amino-acid sequence, 456 residues long: Putative gluconeogenesis factor (456 aa).

It belongs to the gluconeogenesis factor family.

It is found in the cytoplasm. Required for morphogenesis under gluconeogenic growth conditions. The protein is Putative gluconeogenesis factor of Nostoc sp. (strain PCC 7120 / SAG 25.82 / UTEX 2576).